Here is a 267-residue protein sequence, read N- to C-terminus: 4-hydroxy-tetrahydrodipicolinate reductase (267 aa).

NAD(+) contacts are provided by residues 8–13 (GAAGRM) and Glu34. Arg35 contributes to the NADP(+) binding site. Residues 98–100 (GST) and 122–125 (APNM) contribute to the NAD(+) site. His155 acts as the Proton donor/acceptor in catalysis. Position 156 (His156) interacts with (S)-2,3,4,5-tetrahydrodipicolinate. Lys159 acts as the Proton donor in catalysis. 165-166 (GT) contacts (S)-2,3,4,5-tetrahydrodipicolinate.

The protein belongs to the DapB family.

It localises to the cytoplasm. The catalysed reaction is (S)-2,3,4,5-tetrahydrodipicolinate + NAD(+) + H2O = (2S,4S)-4-hydroxy-2,3,4,5-tetrahydrodipicolinate + NADH + H(+). It catalyses the reaction (S)-2,3,4,5-tetrahydrodipicolinate + NADP(+) + H2O = (2S,4S)-4-hydroxy-2,3,4,5-tetrahydrodipicolinate + NADPH + H(+). Its pathway is amino-acid biosynthesis; L-lysine biosynthesis via DAP pathway; (S)-tetrahydrodipicolinate from L-aspartate: step 4/4. Catalyzes the conversion of 4-hydroxy-tetrahydrodipicolinate (HTPA) to tetrahydrodipicolinate. This Geotalea uraniireducens (strain Rf4) (Geobacter uraniireducens) protein is 4-hydroxy-tetrahydrodipicolinate reductase.